Reading from the N-terminus, the 321-residue chain is D-alanine--D-alanine ligase (321 aa).

The ATP-grasp domain occupies 121–315 (RSWFLTNNIN…FTNLIEEIIK (195 aa)). Residue 147–199 (PMKRPYVIKPLTQGSSIGVEVIFAEDNFNFADYDFPYGDQVIIEQYIKGRELQ) participates in ATP binding. The Mg(2+) site is built by Glu268, Glu282, and Asn284.

The protein belongs to the D-alanine--D-alanine ligase family. Mg(2+) is required as a cofactor. It depends on Mn(2+) as a cofactor.

Its subcellular location is the cytoplasm. It catalyses the reaction 2 D-alanine + ATP = D-alanyl-D-alanine + ADP + phosphate + H(+). Its pathway is cell wall biogenesis; peptidoglycan biosynthesis. In terms of biological role, cell wall formation. This chain is D-alanine--D-alanine ligase, found in Rickettsia massiliae (strain Mtu5).